The sequence spans 270 residues: 3-phenylpropionate-dihydrodiol/cinnamic acid-dihydrodiol dehydrogenase (270 aa).

10–34 (FITGGGSGLGLALVERFIEEGAQVA) contacts NAD(+). Residue Ser-143 coordinates substrate. The Proton acceptor role is filled by Tyr-156.

It belongs to the short-chain dehydrogenases/reductases (SDR) family.

The enzyme catalyses 3-(cis-5,6-dihydroxycyclohexa-1,3-dien-1-yl)propanoate + NAD(+) = 3-(2,3-dihydroxyphenyl)propanoate + NADH + H(+). It carries out the reaction (2E)-3-(cis-5,6-dihydroxycyclohexa-1,3-dien-1-yl)prop-2-enoate + NAD(+) = (2E)-3-(2,3-dihydroxyphenyl)prop-2-enoate + NADH + H(+). It functions in the pathway aromatic compound metabolism; 3-phenylpropanoate degradation. Functionally, converts 3-phenylpropionate-dihydrodiol (PP-dihydrodiol) and cinnamic acid-dihydrodiol (CI-dihydrodiol) into 3-(2,3-dihydroxylphenyl)propanoic acid (DHPP) and 2,3-dihydroxicinnamic acid (DHCI), respectively. The chain is 3-phenylpropionate-dihydrodiol/cinnamic acid-dihydrodiol dehydrogenase from Escherichia coli O17:K52:H18 (strain UMN026 / ExPEC).